The primary structure comprises 282 residues: tRNA pseudouridine synthase B (282 aa).

D39 serves as the catalytic Nucleophile.

It belongs to the pseudouridine synthase TruB family. Type 1 subfamily.

The enzyme catalyses uridine(55) in tRNA = pseudouridine(55) in tRNA. In terms of biological role, responsible for synthesis of pseudouridine from uracil-55 in the psi GC loop of transfer RNAs. This chain is tRNA pseudouridine synthase B, found in Borrelia garinii subsp. bavariensis (strain ATCC BAA-2496 / DSM 23469 / PBi) (Borreliella bavariensis).